Here is a 727-residue protein sequence, read N- to C-terminus: Testis anion transporter 1 (727 aa).

Topologically, residues 1–23 (MLTIFPFLEWMCMYRLKDWLLGD) are cytoplasmic. A helical membrane pass occupies residues 24-44 (LLAGISVGLVQVPQGLTLSLL). Topologically, residues 45–47 (ARQ) are extracellular. A helical membrane pass occupies residues 48 to 68 (LIPPLNIAYAAFCSSVIYVIF). Residues 69–74 (GSCHQM) lie on the Cytoplasmic side of the membrane. A helical membrane pass occupies residues 75–95 (SIGSFFLVSALLINVLKISPL). Over 96–130 (NNGHLVMGSFLKDEFSAPSYLMGYNKSLSVVATTT) the chain is Extracellular. A glycan (N-linked (GlcNAc...) asparagine) is linked at Asn-120. A helical transmembrane segment spans residues 131–151 (FLTGIIQLIMGVLGLGFIATY). The Cytoplasmic segment spans residues 152-160 (LPESAMSAY). A helical transmembrane segment spans residues 161–181 (LAAVALHIMLSQLTCIFGIMI). Residues 182–198 (SFHAGPISFFYDIINYC) are Extracellular-facing. A helical membrane pass occupies residues 199–219 (VALPKANSTSILLFLTVVVAL). The Cytoplasmic portion of the chain corresponds to 220-235 (RINKCIRISFNQYPIE). The chain crosses the membrane as a helical span at residues 236–256 (FPMELFLIIGFTVIGNKITMA). The Extracellular segment spans residues 257–283 (TETSQTLIDMIPYSFLFPVTPDFSVLP). A helical membrane pass occupies residues 284-304 (KIILQAISLSLVSSFLLVFLG). At 305–360 (KKIASLHNYSVNSNQDLIAIGLCNVVSSFFRSCVFTGAVARTIIQDKSGGRQQFAS) the chain is on the cytoplasmic side. The helical transmembrane segment at 361–381 (LVGAGVMLLLMVKMGHFFYAL) threads the bilayer. Residues 382–383 (PN) lie on the Extracellular side of the membrane. The helical transmembrane segment at 384-404 (AVLAGIILSNVVPYLETISNL) threads the bilayer. At 405 to 424 (PSLWRQDQYDCALWMMTFSS) the chain is on the cytoplasmic side. Residues 425–445 (SIFLGLDIGLIISVVSAFFIT) traverse the membrane as a helical segment. Over 446–727 (SVRSHRAKIL…LPSFHLQHIF (282 aa)) the chain is Extracellular. Residues 471–722 (DYREIITIPG…NSLSRLPSFH (252 aa)) enclose the STAS domain. An interaction with RACGAP1 region spans residues 592–727 (TVSSMSQKNQ…LPSFHLQHIF (136 aa)).

It belongs to the SLC26A/SulP transporter (TC 2.A.53) family. As to quaternary structure, interacts with RACGAP1. Interacts with CFTR; stimulates anion transport activity of CFTR. N-glycosylated.

Its subcellular location is the membrane. It catalyses the reaction sulfate(out) + chloride(in) = sulfate(in) + chloride(out). The catalysed reaction is oxalate(in) + chloride(out) = oxalate(out) + chloride(in). Antiporter that mediates the exchange of sulfate and oxalate against chloride ions across a membrane. Stimulates anion transport activity of CFTR. May cooperate with CFTR in the regulation of chloride and bicarbonate ions fluxes required for activation of the ADCY10/PKA pathway during sperm motility and sperm capacitation. May play a role in sperm tail differentiation and motility and hence male fertility. The sequence is that of Testis anion transporter 1 from Macaca fascicularis (Crab-eating macaque).